Reading from the N-terminus, the 597-residue chain is Gamma-terpinene synthase, chloroplastic (597 aa).

Residues 1-47 (MATLSMQVSILNKQLKNLNSFGMRASKLPLVARRVDVSTTRLRPICS) constitute a chloroplast transit peptide. Positions 350 and 354 each coordinate Mn(2+). Positions 350–354 (DDVYD) match the DDXXD motif motif. Homodimerization stretches follow at residues 356 to 362 (YGTLDEL) and 428 to 464 (EAKWYYAGYTPTLAEYLENAKVSISSPTIISQVYFTL). Mn(2+) contacts are provided by D494 and E502.

This sequence belongs to the terpene synthase family. As to quaternary structure, homodimer. Mn(2+) is required as a cofactor. Mg(2+) serves as cofactor.

The protein localises to the plastid. It localises to the chloroplast. It carries out the reaction (2E)-geranyl diphosphate = gamma-terpinene + diphosphate. It participates in secondary metabolite biosynthesis; terpenoid biosynthesis. Its function is as follows. Involved in the biosynthesis of phenolic monoterpenes natural products thymol and carvacrol which have a broad range of biological activities acting as antimicrobial compounds, insecticides, antioxidants and pharmaceutical agents. Monoterpene synthase which catalyzes the conversion of geranyl diphosphate (GPP) to gamma-terpinene and minor amounts of other monoterpenes (e.g. alpha-thujene, alpha-terpinene, myrcene, sabinene, (+)-R-limonene, alpha-pinene and alpha-phellandrene). The protein is Gamma-terpinene synthase, chloroplastic of Thymus caespititius (Cretan thyme).